Here is a 162-residue protein sequence, read N- to C-terminus: UPF0114 protein Psyr_4257 (162 aa).

Helical transmembrane passes span 15 to 35, 53 to 73, 109 to 129, and 136 to 156; these read LLAP…LKFF, LILV…LVMV, VAAS…MDAT, and LMWY…MGYL.

It belongs to the UPF0114 family.

Its subcellular location is the cell membrane. The protein is UPF0114 protein Psyr_4257 of Pseudomonas syringae pv. syringae (strain B728a).